A 2225-amino-acid chain; its full sequence is Multifunctional protein pyr1-3 (2225 aa).

M1 carries the post-translational modification N-acetylmethionine. The interval 40 to 390 (MVGYNESISD…NVCGEQQHKS (351 aa)) is GATase (Glutamine amidotransferase). S51, G245, and G247 together coordinate L-glutamine. The Glutamine amidotransferase type-1 domain maps to 196–388 (KVIVLDCGIK…VDNVCGEQQH (193 aa)). The Nucleophile; for GATase activity role is filled by C275. Residues Q279, N317, G319, and F320 each coordinate L-glutamine. Active-site for GATase activity residues include H361 and E363. Positions 391–405 (PMNKSKIIDCPKGIN) are linker. Positions 406 to 948 (KVLILGSGGL…TNDVNINEKS (543 aa)) are CPSase A. The segment at 406 to 1461 (KVLILGSGGL…MKGPMPIENV (1056 aa)) is CPSase (Carbamoyl-phosphate synthase). ATP is bound by residues R526, R566, G572, G573, K603, E610, G636, I637, H638, Q679, and E693. 2 consecutive ATP-grasp domains span residues 530 to 722 (AEKL…KVAL) and 1069 to 1260 (SRLL…KIII). Residues Q679, E693, and N695 each contribute to the Mg(2+) site. 3 residues coordinate Mn(2+): Q679, E693, and N695. The CPSase B stretch occupies residues 949-1461 (YITLGSGSYR…MKGPMPIENV (513 aa)). Residues R1105, K1144, I1146, E1151, G1176, V1177, H1178, S1179, Q1219, and E1231 each coordinate ATP. Positions 1219, 1231, and 1233 each coordinate Mg(2+). Mn(2+) contacts are provided by Q1219, E1231, and N1233. The 147-residue stretch at 1324-1470 (FKAPEKNVLL…VDWRTSNKII (147 aa)) folds into the MGS-like domain. The interval 1463–1797 (WRTSNKIIRL…VRGKVVKVVL (335 aa)) is DHOase (dihydroorotase). Residues H1479 and H1481 each coordinate Zn(2+). Positions 1483 and 1513 each coordinate (S)-dihydroorotate. Zn(2+) is bound by residues K1564, H1599, C1622, H1623, and E1646. K1564 carries the N6-carboxylysine modification. R1670 serves as a coordination point for (S)-dihydroorotate. D1695 contributes to the Zn(2+) binding site. Catalysis depends on D1695, which acts as the For DHOase activity. Residues H1699 and P1711 each coordinate (S)-dihydroorotate. Residues 1798–1916 (RGQIAFIDGK…DTLQTAFNIS (119 aa)) are linker. Residues 1917-2225 (DNSLAGKHIF…LLALVFGAGV (309 aa)) are ATCase (Aspartate transcarbamylase). The carbamoyl phosphate site is built by R1974 and T1975. K2002 provides a ligand contact to L-aspartate. Carbamoyl phosphate-binding residues include R2023, H2051, and Q2054. L-aspartate contacts are provided by R2084 and R2145. L2184 and P2185 together coordinate carbamoyl phosphate.

The protein in the N-terminal section; belongs to the CarA family. This sequence in the 2nd section; belongs to the CarB family. In the 3rd section; belongs to the metallo-dependent hydrolases superfamily. DHOase family. CAD subfamily. It in the C-terminal section; belongs to the aspartate/ornithine carbamoyltransferase superfamily. ATCase family. In terms of assembly, homohexamer. The cofactor is Mg(2+). Mn(2+) serves as cofactor. Requires Zn(2+) as cofactor.

It localises to the cytoplasm. It catalyses the reaction hydrogencarbonate + L-glutamine + 2 ATP + H2O = carbamoyl phosphate + L-glutamate + 2 ADP + phosphate + 2 H(+). The catalysed reaction is L-glutamine + H2O = L-glutamate + NH4(+). The enzyme catalyses hydrogencarbonate + NH4(+) + 2 ATP = carbamoyl phosphate + 2 ADP + phosphate + 2 H(+). It carries out the reaction carbamoyl phosphate + L-aspartate = N-carbamoyl-L-aspartate + phosphate + H(+). It catalyses the reaction (S)-dihydroorotate + H2O = N-carbamoyl-L-aspartate + H(+). It functions in the pathway pyrimidine metabolism; UMP biosynthesis via de novo pathway; (S)-dihydroorotate from bicarbonate: step 1/3. Its pathway is pyrimidine metabolism; UMP biosynthesis via de novo pathway; (S)-dihydroorotate from bicarbonate: step 2/3. The protein operates within pyrimidine metabolism; UMP biosynthesis via de novo pathway; (S)-dihydroorotate from bicarbonate: step 3/3. Its activity is regulated as follows. Allosterically regulated and controlled by phosphorylation. 5-phosphoribose 1-diphosphate is an activator while UMP is an inhibitor of the CPSase reaction. Functionally, multifunctional protein that encodes the first 3 enzymatic activities of the de novo pyrimidine pathway: carbamoylphosphate synthetase (CPSase; EC 6.3.5.5), aspartate transcarbamylase (ATCase; EC 2.1.3.2) and dihydroorotase (DHOase; EC 3.5.2.3). The CPSase-function is accomplished in 2 steps, by a glutamine-dependent amidotransferase activity (GATase) that binds and cleaves glutamine to produce ammonia, followed by an ammonium-dependent carbamoyl phosphate synthetase, which reacts with the ammonia, hydrogencarbonate and ATP to form carbamoyl phosphate. The endogenously produced carbamoyl phosphate is sequestered and channeled to the ATCase active site. ATCase then catalyzes the formation of carbamoyl-L-aspartate from L-aspartate and carbamoyl phosphate. In the last step, DHOase catalyzes the cyclization of carbamoyl aspartate to dihydroorotate. This is Multifunctional protein pyr1-3 (pyr1-3) from Dictyostelium discoideum (Social amoeba).